Consider the following 301-residue polypeptide: 2-dehydropantoate 2-reductase (301 aa).

Residues 11–16 (GAGAMG), N107, and A133 contribute to the NADP(+) site. Residue N107 coordinates substrate. Catalysis depends on K187, which acts as the Proton donor. 4 residues coordinate substrate: N191, N195, N205, and S251. NADP(+) is bound at residue E263.

This sequence belongs to the ketopantoate reductase family.

It is found in the cytoplasm. The enzyme catalyses (R)-pantoate + NADP(+) = 2-dehydropantoate + NADPH + H(+). The protein operates within cofactor biosynthesis; (R)-pantothenate biosynthesis; (R)-pantoate from 3-methyl-2-oxobutanoate: step 2/2. Catalyzes the NADPH-dependent reduction of ketopantoate into pantoic acid. The sequence is that of 2-dehydropantoate 2-reductase from Listeria innocua serovar 6a (strain ATCC BAA-680 / CLIP 11262).